We begin with the raw amino-acid sequence, 595 residues long: FERM domain-containing protein 3 (595 aa).

One can recognise an FERM domain in the interval 32–312 (MKCTIRLLDD…ENQAFYKYAK (281 aa)). A helical membrane pass occupies residues 529–549 (LLVVGLGLLLFVFPLLLLLLE).

It is found in the membrane. Putative tumor suppressor gene that may be implicated in the origin and progression of lung cancer. In Mus musculus (Mouse), this protein is FERM domain-containing protein 3 (Frmd3).